The sequence spans 377 residues: GTPase Obg (377 aa).

One can recognise an Obg domain in the interval 1–159 (MKFVDEATIE…RRLRMELKVL (159 aa)). A disordered region spans residues 127–148 (NIHFKSSTNRAPRQWTPGKEGE). In terms of domain architecture, OBG-type G spans 160–336 (ADVGLLGLPN…LIWALQDYLD (177 aa)). GTP contacts are provided by residues 166–173 (GLPNAGKS), 191–195 (FTTLH), 213–216 (DIPG), 288–291 (NKLD), and 317–319 (SGL). The Mg(2+) site is built by Ser-173 and Thr-193. The tract at residues 339 to 377 (KRKDQDAQDQADGTYVFEDPRFDASRGGAAPATPPGGDE) is disordered.

The protein belongs to the TRAFAC class OBG-HflX-like GTPase superfamily. OBG GTPase family. In terms of assembly, monomer. Mg(2+) is required as a cofactor.

The protein localises to the cytoplasm. In terms of biological role, an essential GTPase which binds GTP, GDP and possibly (p)ppGpp with moderate affinity, with high nucleotide exchange rates and a fairly low GTP hydrolysis rate. Plays a role in control of the cell cycle, stress response, ribosome biogenesis and in those bacteria that undergo differentiation, in morphogenesis control. The protein is GTPase Obg of Bordetella bronchiseptica (strain ATCC BAA-588 / NCTC 13252 / RB50) (Alcaligenes bronchisepticus).